Consider the following 371-residue polypeptide: Protein IQ-DOMAIN 7 (371 aa).

The tract at residues M1–K32 is disordered. A compositionally biased stretch (basic and acidic residues) spans P17–S29. 2 IQ domains span residues R93–R121 and I122–A144. Residues I125–C141 are calmodulin-binding. Disordered regions lie at residues S285 to F308 and L327 to S371. 2 stretches are compositionally biased toward polar residues: residues S297–F308 and L327–S341.

Belongs to the IQD family. As to quaternary structure, binds to multiple calmodulin (CaM) in the presence of Ca(2+) and CaM-like proteins.

The protein resides in the nucleus. It localises to the nucleus envelope. Its subcellular location is the cytoplasm. It is found in the cytoskeleton. May be involved in cooperative interactions with calmodulins or calmodulin-like proteins. Recruits calmodulin proteins to microtubules, thus being a potential scaffold in cellular signaling and trafficking. May associate with nucleic acids and regulate gene expression at the transcriptional or post-transcriptional level. The protein is Protein IQ-DOMAIN 7 of Arabidopsis thaliana (Mouse-ear cress).